The sequence spans 351 residues: MNLQSPHLTIEMTQEIFYCQEALSLESGESFPEFQLSFTTQGQLNANKDNVIWVLHALTGDANPHEWWSGLIGEDKFFDPSKYFIVCANFLGSCYGSTQPLSNNPNNGKPYYYDFPNITTRDIASALDKLRIHLGLEKINTVIGGSLGGQVGLEWAVSLGEKLENAIIVASNAKASPWIIGFNETQRMAIESDSTWGKTQPEAGKKGLETARAIGMLSYRHPMTFLQNQSETEEKRDDFKISSYLRYQGLKLANRFNAMSYWILSKAMDSHDIGRGRGGTPVALSNIKCKVLSIGVDTDILFTSEESRYISKHVPKGTYREISSIYGHDAFLIEYEQLQYILKSFYLENNG.

The AB hydrolase-1 domain maps to 51 to 334 (VIWVLHALTG…IYGHDAFLIE (284 aa)). Serine 146 (nucleophile) is an active-site residue. Arginine 212 contacts substrate. Residues aspartate 299 and histidine 328 contribute to the active site. Aspartate 329 provides a ligand contact to substrate.

The protein belongs to the AB hydrolase superfamily. MetX family. In terms of assembly, homodimer.

Its subcellular location is the cytoplasm. The catalysed reaction is L-homoserine + acetyl-CoA = O-acetyl-L-homoserine + CoA. The protein operates within amino-acid biosynthesis; L-methionine biosynthesis via de novo pathway; O-acetyl-L-homoserine from L-homoserine: step 1/1. Functionally, transfers an acetyl group from acetyl-CoA to L-homoserine, forming acetyl-L-homoserine. In Cyclobacterium marinum (strain ATCC 25205 / DSM 745 / LMG 13164 / NCIMB 1802) (Flectobacillus marinus), this protein is Homoserine O-acetyltransferase.